The following is a 73-amino-acid chain: Metallothionein (73 aa).

Cd(2+) is bound by residues Cys-15, Cys-20, Cys-26, Cys-28, Cys-32, Cys-34, Cys-39, Cys-46, Cys-48, Cys-52, Cys-54, Cys-58, Cys-64, Cys-66, Cys-70, and Cys-72.

The protein belongs to the metallothionein superfamily. Type 2 family.

Its function is as follows. The metallothioneins are involved in the cellular sequestration of toxic metal ions. The chain is Metallothionein from Dreissena polymorpha (Zebra mussel).